The chain runs to 502 residues: ATP synthase subunit alpha (502 aa).

169–176 (GDRQTGKT) contacts ATP.

It belongs to the ATPase alpha/beta chains family. As to quaternary structure, F-type ATPases have 2 components, CF(1) - the catalytic core - and CF(0) - the membrane proton channel. CF(1) has five subunits: alpha(3), beta(3), gamma(1), delta(1), epsilon(1). CF(0) has three main subunits: a(1), b(2) and c(9-12). The alpha and beta chains form an alternating ring which encloses part of the gamma chain. CF(1) is attached to CF(0) by a central stalk formed by the gamma and epsilon chains, while a peripheral stalk is formed by the delta and b chains.

The protein localises to the cell inner membrane. It catalyses the reaction ATP + H2O + 4 H(+)(in) = ADP + phosphate + 5 H(+)(out). Produces ATP from ADP in the presence of a proton gradient across the membrane. The alpha chain is a regulatory subunit. In Citrifermentans bemidjiense (strain ATCC BAA-1014 / DSM 16622 / JCM 12645 / Bem) (Geobacter bemidjiensis), this protein is ATP synthase subunit alpha.